The sequence spans 851 residues: DNA mismatch repair protein MutS (851 aa).

602 to 609 (GPNMSGKS) serves as a coordination point for ATP.

The protein belongs to the DNA mismatch repair MutS family.

In terms of biological role, this protein is involved in the repair of mismatches in DNA. It is possible that it carries out the mismatch recognition step. This protein has a weak ATPase activity. The sequence is that of DNA mismatch repair protein MutS from Streptococcus pyogenes serotype M6 (strain ATCC BAA-946 / MGAS10394).